Reading from the N-terminus, the 611-residue chain is Leukotriene A-4 hydrolase (611 aa).

Lysine 73 is subject to N6-acetyllysine. A peptide is bound by residues 135–137 (QCQ) and 267–272 (PYGGME). Histidine 296 is a Zn(2+) binding site. The Proton acceptor role is filled by glutamate 297. Zn(2+) is bound by residues histidine 300 and glutamate 319. An N6-acetyllysine modification is found at lysine 337. The Proton donor role is filled by tyrosine 384. Lysine 414 is modified (N6-acetyllysine). A Phosphoserine modification is found at serine 416. 564-566 (RMK) serves as a coordination point for a peptide. Residue lysine 573 is modified to N6-acetyllysine.

The protein belongs to the peptidase M1 family. Monomer. The cofactor is Zn(2+). In terms of processing, phosphorylation at Ser-416 inhibits leukotriene-A4 hydrolase activity. In terms of tissue distribution, isoform 1 and isoform 2 are expressed in monocytes, lymphocytes, neutrophils, reticulocytes, platelets and fibroblasts.

Its subcellular location is the cytoplasm. It carries out the reaction leukotriene A4 + H2O = leukotriene B4. It catalyses the reaction (5S,6S)-epoxy-(18R)-hydroxy-(7E,9E,11Z,14Z,16E)-eicosapentaenoate + H2O = resolvin E1. The enzyme catalyses (5S,6S)-epoxy-(18S)-hydroxy-(7E,9E,11Z,14Z,16E)-eicosapentaenoate + H2O = 18S-resolvin E1. The catalysed reaction is Release of the N-terminal residue from a tripeptide.. It functions in the pathway lipid metabolism; leukotriene B4 biosynthesis. Its activity is regulated as follows. Inhibited by bestatin. The epoxide hydrolase activity is restrained by suicide inactivation that involves binding of LTA4 to Tyr-379. 4-(4-benzylphenyl)thiazol-2-amine (ARM1) selectively inhibits the epoxide hydrolase activity. Bifunctional zinc metalloenzyme that comprises both epoxide hydrolase (EH) and aminopeptidase activities. Acts as an epoxide hydrolase to catalyze the conversion of LTA4 to the pro-inflammatory mediator leukotriene B4 (LTB4). Also has aminopeptidase activity, with high affinity for N-terminal arginines of various synthetic tripeptides. In addition to its pro-inflammatory EH activity, may also counteract inflammation by its aminopeptidase activity, which inactivates by cleavage another neutrophil attractant, the tripeptide Pro-Gly-Pro (PGP), a bioactive fragment of collagen generated by the action of matrix metalloproteinase-9 (MMP9) and prolylendopeptidase (PREPL). Involved also in the biosynthesis of resolvin E1 and 18S-resolvin E1 from eicosapentaenoic acid, two lipid mediators that show potent anti-inflammatory and pro-resolving actions. This is Leukotriene A-4 hydrolase (LTA4H) from Homo sapiens (Human).